Here is a 190-residue protein sequence, read N- to C-terminus: Threonylcarbamoyl-AMP synthase (190 aa).

The 184-residue stretch at 7 to 190 (NFVLADIVRA…ALTGKRFRQG (184 aa)) folds into the YrdC-like domain.

It belongs to the SUA5 family. TsaC subfamily.

The protein localises to the cytoplasm. The enzyme catalyses L-threonine + hydrogencarbonate + ATP = L-threonylcarbamoyladenylate + diphosphate + H2O. Its function is as follows. Required for the formation of a threonylcarbamoyl group on adenosine at position 37 (t(6)A37) in tRNAs that read codons beginning with adenine. Catalyzes the conversion of L-threonine, HCO(3)(-)/CO(2) and ATP to give threonylcarbamoyl-AMP (TC-AMP) as the acyladenylate intermediate, with the release of diphosphate. In Yersinia pestis bv. Antiqua (strain Angola), this protein is Threonylcarbamoyl-AMP synthase.